Reading from the N-terminus, the 474-residue chain is MADIKDYKFWFVTGSQFLYGPEVLKQVEEDSKKIIEKLNESGNLPYPIEFKTVGVTAENITEAMKEANYDDSVAGVITWAHTFSPAKNWIRGTQLLNKPLLHLATQMLNNIPYDSIDFDYMNLNQSAHGDREYAFINARLRLNNKIVFGHWADEAVQVQIGKWMDVAVAYEESFKIKVVTFADKMRNVAVTDGDKIEAQIKFGWTVDYWGVGDLVTYVNAIDDADIDNLYIELQDKYDFVAGQNDSEKYEHNVKYQLREYLGIKRFLTDKGYSAFTTNFEDLVGLEQLPGLAAQLLMADGFGFAGEGDWKTAALTRLLKIVSHNQATAFMEDYTLDLRQGHEAILGSHMLEVDPTIASDKPRVEVHPLGIGGKEDPARLVFSGRTGDAVDVTISDFGDEFKLISYDVTGNKPEAETPYLPVAKQLWTPKAGLKAGAEGWLTVGGGHHTTLSFSVDSEQLTDLANLFGVTYVDIK.

4 residues coordinate Mn(2+): Glu306, Glu331, His348, and His447.

This sequence belongs to the arabinose isomerase family. Requires Mn(2+) as cofactor.

It carries out the reaction beta-L-arabinopyranose = L-ribulose. The protein operates within carbohydrate degradation; L-arabinose degradation via L-ribulose; D-xylulose 5-phosphate from L-arabinose (bacterial route): step 1/3. In terms of biological role, catalyzes the conversion of L-arabinose to L-ribulose. This Leuconostoc mesenteroides subsp. mesenteroides (strain ATCC 8293 / DSM 20343 / BCRC 11652 / CCM 1803 / JCM 6124 / NCDO 523 / NBRC 100496 / NCIMB 8023 / NCTC 12954 / NRRL B-1118 / 37Y) protein is L-arabinose isomerase.